Reading from the N-terminus, the 379-residue chain is MEKTFALITIFLAFAFSGKCSDVFSRCDFPEGFVFGSSTSAYQWEGAVAEDGRKPSVWDRFCHSHNNQGNGDITCDGYHKYKEDVKLMVDTNLDAFRFSISWSRLIPNRRGPVNQKGLQFYKNLIQELVNHGIEPYVTLHHFDHPQYLEDEYEGWLNHMIVEDFTAYADVCFREFGNHVKFWTTINEGNIFSIGGYNDGDSPPGRCSIPGQNCLLGNSSTEPYIVGHNLLLAHASVSRLYKQNYKDKQGGSIGFSILTIGFSPSTSSKDDAIATQRANDFFNGWMLGPLIYGDYPDTMKRIVGSRMPVFSEEESEQVKGSSDYIGINHYLAASITNSKLKPSISGNPDFYSDMNVILSFFANFSSSEYDVAPWAIEAVL.

An N-terminal signal peptide occupies residues 1 to 20 (MEKTFALITIFLAFAFSGKC). A beta-D-glucoside contacts are provided by residues Gln-43, His-141, and 186-187 (NE). The active-site Proton donor is the Glu-187. Cysteines 206 and 213 form a disulfide. An N-linked (GlcNAc...) asparagine glycan is attached at Asn-217. Tyr-329 contacts a beta-D-glucoside. Asn-362 is a glycosylation site (N-linked (GlcNAc...) asparagine).

The protein belongs to the glycosyl hydrolase 1 family.

The catalysed reaction is Hydrolysis of terminal, non-reducing beta-D-glucosyl residues with release of beta-D-glucose.. The sequence is that of Putative beta-glucosidase 6 from Arabidopsis thaliana (Mouse-ear cress).